Consider the following 482-residue polypeptide: MIIAAPPPQPASNQPVHVIGGGLAGSEATWQLARAGVRVVLHEMRPHRSTEAHKTDGLAELVCSNSFRSDDAANNAVGLLHAEMRRLGSLVMRAADANQVPAGGALAVDRDGFSAAVTKALAEHPLIEIRREEIAGLPPEDWGNVIVATGPLTSAALAEAVRALTDESALAFFDAIAPIVHRDSIDMSIAWFQSRYDKAGPGGSGADYLNCPMNREQYDAFVDALIAGDKVDFKDWEKDTPYFDGCLPIEVMAERGRETLRHGPMKPVGLTNPHNPTVKAYAIVQLRQDNKLGTLFNMVGFQTKLNYAAQQRVFRTIPGLENAEFARLGGLHRNTFLNSPKLLDAGLRLRAAPRLRFAGQMTGCEGYVESAGIGLVAGLSAAADALGRSMTTPPPTTALGALLGHITGGHIETIDAGPRSFQPMNINFGLFPPLAQAPTHGPDGKKLRGPEKSVAKKQALSARALADLDAWIAASLKLPAAA.

Residue 20 to 25 (GGGLAG) coordinates FAD.

This sequence belongs to the MnmG family. TrmFO subfamily. FAD is required as a cofactor.

It localises to the cytoplasm. It catalyses the reaction uridine(54) in tRNA + (6R)-5,10-methylene-5,6,7,8-tetrahydrofolate + NADH + H(+) = 5-methyluridine(54) in tRNA + (6S)-5,6,7,8-tetrahydrofolate + NAD(+). The enzyme catalyses uridine(54) in tRNA + (6R)-5,10-methylene-5,6,7,8-tetrahydrofolate + NADPH + H(+) = 5-methyluridine(54) in tRNA + (6S)-5,6,7,8-tetrahydrofolate + NADP(+). In terms of biological role, catalyzes the folate-dependent formation of 5-methyl-uridine at position 54 (M-5-U54) in all tRNAs. The protein is Methylenetetrahydrofolate--tRNA-(uracil-5-)-methyltransferase TrmFO of Rhodopseudomonas palustris (strain HaA2).